Here is a 476-residue protein sequence, read N- to C-terminus: Membrane-bound lytic murein transglycosylase F (476 aa).

Positions 1-22 are cleaved as a signal peptide; that stretch reads MTRFLFALILGFLLTACQQVTV. The interval 23–257 is non-LT domain; it reads DETEFVPKKL…HLNEKYFGHV (235 aa). Positions 258-476 are LT domain; sequence KRFDYVDTRA…AGTLSPEQPK (219 aa). Glu302 is an active-site residue. Residues 446–476 are disordered; that stretch reads SKQQNPEEEPSDLASEEPAIPAGTLSPEQPK. The segment covering 451-460 has biased composition (acidic residues); sequence PEEEPSDLAS.

In the N-terminal section; belongs to the bacterial solute-binding protein 3 family. It in the C-terminal section; belongs to the transglycosylase Slt family.

Its subcellular location is the cell outer membrane. The enzyme catalyses Exolytic cleavage of the (1-&gt;4)-beta-glycosidic linkage between N-acetylmuramic acid (MurNAc) and N-acetylglucosamine (GlcNAc) residues in peptidoglycan, from either the reducing or the non-reducing ends of the peptidoglycan chains, with concomitant formation of a 1,6-anhydrobond in the MurNAc residue.. Murein-degrading enzyme that degrades murein glycan strands and insoluble, high-molecular weight murein sacculi, with the concomitant formation of a 1,6-anhydromuramoyl product. Lytic transglycosylases (LTs) play an integral role in the metabolism of the peptidoglycan (PG) sacculus. Their lytic action creates space within the PG sacculus to allow for its expansion as well as for the insertion of various structures such as secretion systems and flagella. The sequence is that of Membrane-bound lytic murein transglycosylase F from Shewanella baltica (strain OS155 / ATCC BAA-1091).